Consider the following 315-residue polypeptide: BTB/POZ domain-containing adapter for CUL3-mediated RhoA degradation protein 3 (315 aa).

Met1 is subject to N-acetylmethionine. Ser23 is subject to Phosphoserine. Residues 32–100 enclose the BTB domain; that stretch reads KYVKLNVGGA…LRDGAVPLPE (69 aa). The short motif at 239–245 is the Interaction with PCNA element; it reads QTKVEFP. The tract at residues 269 to 294 is disordered; that stretch reads NALLEATGGAAGRSHHLDEDEERERE.

It belongs to the BACURD family. In terms of assembly, homotetramer; forms a two-fold symmetric tetramer in solution. Interacts with CUL3; interaction is direct and forms a 5:5 heterodecamer. Component of the BCR(BACURD3) E3 ubiquitin ligase complex, at least composed of CUL3, KCTD10/BACURD3 and RBX1. Interacts with DNA polymerase delta subunit 2/POLD2. Interacts with PCNA. As to expression, expressed at highest levels in lung. Also detected in testis and heart. Very low expression, if any, in brain, liver, spleen, kidney and skeletal muscle.

It localises to the nucleus. It participates in protein modification; protein ubiquitination. Functionally, substrate-specific adapter of a BCR (BTB-CUL3-RBX1) E3 ubiquitin-protein ligase complex. The BCR(BACURD3) E3 ubiquitin ligase complex mediates the ubiquitination of target proteins, leading to their degradation by the proteasome. The protein is BTB/POZ domain-containing adapter for CUL3-mediated RhoA degradation protein 3 (Kctd10) of Rattus norvegicus (Rat).